Here is a 157-residue protein sequence, read N- to C-terminus: SsrA-binding protein (157 aa).

The disordered stretch occupies residues 130-157; it reads KAEHDKRDTIKEREGKREVERVMKSRHR.

This sequence belongs to the SmpB family.

The protein localises to the cytoplasm. Its function is as follows. Required for rescue of stalled ribosomes mediated by trans-translation. Binds to transfer-messenger RNA (tmRNA), required for stable association of tmRNA with ribosomes. tmRNA and SmpB together mimic tRNA shape, replacing the anticodon stem-loop with SmpB. tmRNA is encoded by the ssrA gene; the 2 termini fold to resemble tRNA(Ala) and it encodes a 'tag peptide', a short internal open reading frame. During trans-translation Ala-aminoacylated tmRNA acts like a tRNA, entering the A-site of stalled ribosomes, displacing the stalled mRNA. The ribosome then switches to translate the ORF on the tmRNA; the nascent peptide is terminated with the 'tag peptide' encoded by the tmRNA and targeted for degradation. The ribosome is freed to recommence translation, which seems to be the essential function of trans-translation. This is SsrA-binding protein from Acidovorax sp. (strain JS42).